The sequence spans 233 residues: MTAFKQGDPTTLNRLYGRSIGKPLRTHQQHLVDNLLPQISPPAEGPVTAERLFGEDCPLHFEIGFGGGEHLVYRADLLPNHGFIGAEPFLNGVASCLSQVEEQRLANIRIHNGDALEVLDRVPDGALTMLYLLHPDPWPKNKHAKRRMMNDGPVKMFADKLKPGGEFRFGTDHPVYLRHALMVMRRHTDAFEWVVEGPSDWQNRPSGWPETRYEHKARTKFGHEVWYFRFRRR.

S-adenosyl-L-methionine-binding residues include glutamate 62, glutamate 87, aspartate 114, and aspartate 136. The active site involves aspartate 136. Substrate contacts are provided by residues lysine 140, aspartate 172, and 211–214 (TRYE).

It belongs to the class I-like SAM-binding methyltransferase superfamily. TrmB family.

It carries out the reaction guanosine(46) in tRNA + S-adenosyl-L-methionine = N(7)-methylguanosine(46) in tRNA + S-adenosyl-L-homocysteine. It participates in tRNA modification; N(7)-methylguanine-tRNA biosynthesis. Functionally, catalyzes the formation of N(7)-methylguanine at position 46 (m7G46) in tRNA. In Erythrobacter litoralis (strain HTCC2594), this protein is tRNA (guanine-N(7)-)-methyltransferase.